A 91-amino-acid polypeptide reads, in one-letter code: uncharacterized protein (91 aa).

A signal peptide spans 1–21 (MKIISKMLVGALALAVTNVYA).

The protein belongs to the BhsA/McbA family.

The protein localises to the periplasm. This is an uncharacterized protein from Escherichia coli (strain K12).